The sequence spans 597 residues: Uptake hydrogenase large subunit (597 aa).

4 residues coordinate Ni(2+): Cys75, Cys78, Cys576, and Cys579.

The protein belongs to the [NiFe]/[NiFeSe] hydrogenase large subunit family. In terms of assembly, heterodimer of a large and a small subunit. It depends on Ni(2+) as a cofactor.

It is found in the cell membrane. The enzyme catalyses H2 + A = AH2. In terms of biological role, this enzyme recycles the H(2) produced by nitrogenase to increase the production of ATP and to protect nitrogenase against inhibition or damage by O(2) under carbon- or phosphate-limited conditions. The polypeptide is Uptake hydrogenase large subunit (hupB) (Rhodobacter capsulatus (Rhodopseudomonas capsulata)).